We begin with the raw amino-acid sequence, 287 residues long: Cis-prenyltransferase 7, chloroplastic (287 aa).

The transit peptide at 1-34 (MLSLGFSLPPPSDNKLIITNNNQYNYRTNLANVC) directs the protein to the chloroplast. Asp-61 is an active-site residue.

This sequence belongs to the UPP synthase family. The cofactor is Mg(2+). In terms of tissue distribution, expressed in leaf trichomes and stem trichomes.

It localises to the plastid. It is found in the chloroplast. Functionally, uses geranylgeranyl diphosphate to catalyze the cis-prenyl chain elongation and produce polyprenyl diphosphate with a chain of 35 carbons. The sequence is that of Cis-prenyltransferase 7, chloroplastic from Solanum lycopersicum (Tomato).